The sequence spans 748 residues: Basic juvenile hormone-suppressible protein 1 (748 aa).

The signal sequence occupies residues 1–17 (MRVLVLVASLGLRGSVV).

The protein belongs to the hemocyanin family. As to expression, fat body, and hemolymph of larvae.

This Trichoplusia ni (Cabbage looper) protein is Basic juvenile hormone-suppressible protein 1 (BJSP-1).